The sequence spans 592 residues: Bifunctional purine biosynthesis protein ADE17 (592 aa).

One can recognise an MGS-like domain in the interval 1-147; the sequence is MANYTKTAIL…KNHARVTILS (147 aa). Residues 35 to 38, 65 to 68, 102 to 103, and 126 to 127 each bind IMP; these read SGGT, RVKT, CN, and DI. The Proton donor/acceptor; for FAICAR cyclization activity role is filled by Lys-138. 5-amino-1-(5-phospho-beta-D-ribosyl)imidazole-4-carboxamide contacts are provided by residues 206–207, His-267, Gly-315, Asp-338, Asn-430, and Arg-450; that span reads RY. Catalysis depends on His-267, which acts as the Proton acceptor; for AICAR formyltransferase activity. Ile-451 contacts (6R)-10-formyltetrahydrofolate. Phe-541 contributes to the 5-amino-1-(5-phospho-beta-D-ribosyl)imidazole-4-carboxamide binding site. Residues Asp-546 and 565 to 566 each bind (6R)-10-formyltetrahydrofolate; that span reads SV. 5-amino-1-(5-phospho-beta-D-ribosyl)imidazole-4-carboxamide is bound at residue Arg-588.

This sequence belongs to the PurH family. In terms of assembly, homodimer.

Its subcellular location is the cytoplasm. The protein resides in the cytosol. It carries out the reaction (6R)-10-formyltetrahydrofolate + 5-amino-1-(5-phospho-beta-D-ribosyl)imidazole-4-carboxamide = 5-formamido-1-(5-phospho-D-ribosyl)imidazole-4-carboxamide + (6S)-5,6,7,8-tetrahydrofolate. It catalyses the reaction IMP + H2O = 5-formamido-1-(5-phospho-D-ribosyl)imidazole-4-carboxamide. The protein operates within purine metabolism; IMP biosynthesis via de novo pathway; 5-formamido-1-(5-phospho-D-ribosyl)imidazole-4-carboxamide from 5-amino-1-(5-phospho-D-ribosyl)imidazole-4-carboxamide (10-formyl THF route): step 1/1. It participates in purine metabolism; IMP biosynthesis via de novo pathway; IMP from 5-formamido-1-(5-phospho-D-ribosyl)imidazole-4-carboxamide: step 1/1. In terms of biological role, bifunctional enzyme that catalyzes the last two steps of purine biosynthesis. Acts as a transformylase that incorporates a formyl group to the AMP analog AICAR (5-amino-1-(5-phospho-beta-D-ribosyl)imidazole-4-carboxamide) to produce the intermediate formyl-AICAR (FAICAR). Also catalyzes the cyclization of FAICAR to IMP. The polypeptide is Bifunctional purine biosynthesis protein ADE17 (Saccharomyces cerevisiae (strain ATCC 204508 / S288c) (Baker's yeast)).